Reading from the N-terminus, the 436-residue chain is Serine hydroxymethyltransferase (436 aa).

Residues Leu-133 and 137-139 each bind (6S)-5,6,7,8-tetrahydrofolate; that span reads GHI. Position 242 is an N6-(pyridoxal phosphate)lysine (Lys-242).

This sequence belongs to the SHMT family. As to quaternary structure, homodimer. Requires pyridoxal 5'-phosphate as cofactor.

The protein resides in the cytoplasm. The enzyme catalyses (6R)-5,10-methylene-5,6,7,8-tetrahydrofolate + glycine + H2O = (6S)-5,6,7,8-tetrahydrofolate + L-serine. Its pathway is one-carbon metabolism; tetrahydrofolate interconversion. The protein operates within amino-acid biosynthesis; glycine biosynthesis; glycine from L-serine: step 1/1. In terms of biological role, catalyzes the reversible interconversion of serine and glycine with tetrahydrofolate (THF) serving as the one-carbon carrier. This reaction serves as the major source of one-carbon groups required for the biosynthesis of purines, thymidylate, methionine, and other important biomolecules. Also exhibits THF-independent aldolase activity toward beta-hydroxyamino acids, producing glycine and aldehydes, via a retro-aldol mechanism. In Pelagibacter ubique (strain HTCC1062), this protein is Serine hydroxymethyltransferase.